Reading from the N-terminus, the 279-residue chain is Putative biopolymer transport protein ExbB homolog (279 aa).

Helical transmembrane passes span 19–39, 126–146, and 162–182; these read SGGVITYLIAAIGIYGFITAL, IIEVAPMLGLIGTVIGIWYTF, and IYVALITTILGLAVAIILMPL.

This sequence belongs to the ExbB/TolQ family.

It is found in the cell membrane. The polypeptide is Putative biopolymer transport protein ExbB homolog (Methanothermobacter thermautotrophicus (strain ATCC 29096 / DSM 1053 / JCM 10044 / NBRC 100330 / Delta H) (Methanobacterium thermoautotrophicum)).